We begin with the raw amino-acid sequence, 472 residues long: MKRLNLLCCCVASLLLLGTAEEVEDASEPTKRDRSHLENTLKLNEDKPADDFSGVLQRLRKIYHASIKPLEQSYRYNELRQHEITDGEITSKPMVLFLGPWSVGKSSMINYLLGLDDTPYQLYTGAEPTTSEFTVIMHGPKLKTIEGIVMAADSARSFSPLEKFGQNFLEKLIGIEVPHKLLERVTFVDTPGIIENRKQQERGYPFNDVCQWFIDRADLIFVVFDPTKLDVGLELEMLFRQLKGRESQIRIILNKADSLATQELMRVYGALFWSLAPLINVTEPPRVYVSSFWPHEYHPDTHKDLFLKEEISLLEDLNQVIENRMENKIAFIRQHAIRVRIHALLVDRYLQTYKDKMTFFSDGELVFRDIVEDPDKFFIFKSILAKTNVSKFDLPNREAYKDFFGINPITSFKLLSQQCSYMGGCYLEKIEKAITRELPDLLGSIGLGKKPNVLSCDVTGCGETPKNRYKKP.

The N-terminal stretch at 1–20 (MKRLNLLCCCVASLLLLGTA) is a signal peptide. N-linked (GlcNAc...) asparagine glycosylation occurs at Leu59. The Dynamin-type G domain occupies 89 to 330 (ITSKPMVLFL…IENRMENKIA (242 aa)). A G1 motif region spans residues 99 to 106 (GPWSVGKS). Positions 127-128 (EP) are G2 motif. The G3 motif stretch occupies residues 189 to 192 (DTPG). The segment at 254–257 (NKAD) is G4 motif. Leu278 is a region of interest (G5 motif). Asn280 and Asn388 each carry an N-linked (GlcNAc...) asparagine glycan.

This sequence belongs to the TRAFAC class dynamin-like GTPase superfamily. Dynamin/Fzo/YdjA family. N-glycosylated.

The protein resides in the sarcoplasmic reticulum lumen. The protein localises to the sarcoplasmic reticulum membrane. This is Sarcalumenin (SRL) from Gallus gallus (Chicken).